The primary structure comprises 929 residues: Protein translocase subunit SecA (929 aa).

ATP is bound by residues glutamine 83, 101 to 105, and aspartate 491; that span reads GEGKT.

It belongs to the SecA family. In terms of assembly, monomer and homodimer. Part of the essential Sec protein translocation apparatus which comprises SecA, SecYEG and auxiliary proteins SecDF. Other proteins may also be involved.

The protein localises to the cell inner membrane. It is found in the cellular thylakoid membrane. It localises to the cytoplasm. It carries out the reaction ATP + H2O + cellular proteinSide 1 = ADP + phosphate + cellular proteinSide 2.. Part of the Sec protein translocase complex. Interacts with the SecYEG preprotein conducting channel. Has a central role in coupling the hydrolysis of ATP to the transfer of proteins into and across the cell membrane, serving as an ATP-driven molecular motor driving the stepwise translocation of polypeptide chains across the membrane. Its function is as follows. Probably participates in protein translocation into and across both the cytoplasmic and thylakoid membranes in cyanobacterial cells. The polypeptide is Protein translocase subunit SecA (Thermosynechococcus vestitus (strain NIES-2133 / IAM M-273 / BP-1)).